The primary structure comprises 92 residues: Long neurotoxin 73 (92 aa).

An N-terminal signal peptide occupies residues 1–21 (MKTLLLTLVVVTIVCLDLGDS). Cystine bridges form between C24/C41, C34/C62, C47/C51, C66/C77, and C78/C83.

This sequence belongs to the three-finger toxin family. Long-chain subfamily. Type II alpha-neurotoxin sub-subfamily. Expressed by the venom gland.

The protein resides in the secreted. Its function is as follows. Binds with high affinity to muscular (alpha-1/CHRNA1) and neuronal (alpha-7/CHRNA7) nicotinic acetylcholine receptor (nAChR) and inhibits acetylcholine from binding to the receptor, thereby impairing neuromuscular and neuronal transmission. The protein is Long neurotoxin 73 of Drysdalia coronoides (White-lipped snake).